We begin with the raw amino-acid sequence, 350 residues long: tRNA uridine(34) hydroxylase (350 aa).

The Rhodanese domain maps to Asp-146 to Leu-240. Catalysis depends on Cys-200, which acts as the Cysteine persulfide intermediate. Basic and acidic residues predominate over residues Arg-319–Gly-328. Residues Arg-319–Glu-350 form a disordered region.

The protein belongs to the TrhO family.

The catalysed reaction is uridine(34) in tRNA + AH2 + O2 = 5-hydroxyuridine(34) in tRNA + A + H2O. Catalyzes oxygen-dependent 5-hydroxyuridine (ho5U) modification at position 34 in tRNAs. The protein is tRNA uridine(34) hydroxylase of Salmonella newport (strain SL254).